Consider the following 167-residue polypeptide: 18.8 kDa class II heat shock protein (167 aa).

One can recognise a sHSP domain in the interval 49-167 (DAKAMAATPA…KPKTVEVKVA (119 aa)).

It belongs to the small heat shock protein (HSP20) family.

The protein resides in the cytoplasm. The protein is 18.8 kDa class II heat shock protein (SHSP-2) of Ipomoea nil (Japanese morning glory).